The following is a 153-amino-acid chain: UPF0756 membrane protein lmo1568 (153 aa).

The next 4 helical transmembrane spans lie at 6 to 26, 54 to 74, 80 to 100, and 117 to 137; these read MLFL…SLII, WGVT…QIGF, SFKS…SILA, and LVFG…GPVI.

It belongs to the UPF0756 family.

It is found in the cell membrane. This chain is UPF0756 membrane protein lmo1568, found in Listeria monocytogenes serovar 1/2a (strain ATCC BAA-679 / EGD-e).